The primary structure comprises 528 residues: Probable serine/threonine-protein kinase 380R (528 aa).

The disordered stretch occupies residues 70–96 (VKIPKSKSPPKVKSPKRKKSPVRRRVS). Residues 73–95 (PKSKSPPKVKSPKRKKSPVRRRV) show a composition bias toward basic residues. The Protein kinase domain occupies 156-507 (FTNVKAVGKG…LANVLIHKIF (352 aa)). Residues 162-170 (VGKGSFGTV) and Lys-187 contribute to the ATP site. Asp-302 (proton acceptor) is an active-site residue.

It belongs to the protein kinase superfamily. Ser/Thr protein kinase family.

It catalyses the reaction L-seryl-[protein] + ATP = O-phospho-L-seryl-[protein] + ADP + H(+). The catalysed reaction is L-threonyl-[protein] + ATP = O-phospho-L-threonyl-[protein] + ADP + H(+). The chain is Probable serine/threonine-protein kinase 380R from Invertebrate iridescent virus 6 (IIV-6).